The primary structure comprises 358 residues: Gibberellin 3-beta-dioxygenase 1 (358 aa).

One can recognise a Fe2OG dioxygenase domain in the interval 204 to 308 (DLNWAQAALQ…RLSVAFLWGP (105 aa)). Fe cation contacts are provided by histidine 232, aspartate 234, and histidine 289. The active site involves arginine 299.

Belongs to the iron/ascorbate-dependent oxidoreductase family. GA3OX subfamily. L-ascorbate serves as cofactor. The cofactor is Fe cation. As to expression, expressed in stems, roots, leaves, flowers, and siliques. Highly expressed near the nodes in stems and in the stamen filaments of flowers. Detected in developing cotyledons, vegetative shoot apical meristem and non-meristematic, non-elongation regions of the roots. Found in the cortex and the endodermis of the embryo axis in germinating seeds and in the placenta in developing siliques.

The enzyme catalyses gibberellin A9 + 2-oxoglutarate + O2 = gibberellin A4 + succinate + CO2. It carries out the reaction gibberellin A20 + 2-oxoglutarate + O2 = gibberellin A1 + succinate + CO2. The protein operates within plant hormone biosynthesis; gibberellin biosynthesis. Functionally, converts the inactive gibberellin (GA) precursors GA9 and GA20 into the bioactives gibberellins GA4 and GA1, respectively. Involved in the production of bioactive GA for vegetative growth and development. In Arabidopsis thaliana (Mouse-ear cress), this protein is Gibberellin 3-beta-dioxygenase 1 (GA3OX1).